The primary structure comprises 217 residues: MYLFHLCLVFACVSCPTVQASKLCLGWLWDMDIDPYKEFGSSYQLLNFLPLDFFPELNALVDTATALYEEELTGREHCSPHHTAIRQALVCWEELTRLIAWMSANINSEEVRRVIVAHVNDTWGLKVRQNLWFHLSCLTFGQHTVQEFLVSFGVRIRTPAPYRPPNAPILSTLPEHTVIRRRGSARVVRSPRRRTPSPRRRRSQSPRRRPQSPASNC.

An N-terminal signal peptide occupies residues 1 to 20; the sequence is MYLFHLCLVFACVSCPTVQA. Residues 26-28 are HBEAG; sequence GWL. The span at 181 to 210 shows a compositional bias: basic residues; the sequence is RRGSARVVRSPRRRTPSPRRRRSQSPRRRP. The tract at residues 181–217 is disordered; it reads RRGSARVVRSPRRRTPSPRRRRSQSPRRRPQSPASNC. The 1; half-length repeat unit spans residues 190–196; it reads SPRRRTP. Residues 190–211 form a 3 X 8 AA approximate repeats of S-P-R-R-R-R-[PS]-Q region; sequence SPRRRTPSPRRRRSQSPRRRPQ. A propeptide spanning residues 190–217 is cleaved from the precursor; sequence SPRRRTPSPRRRRSQSPRRRPQSPASNC. Repeat copies occupy residues 197-204 and 205-211.

It belongs to the orthohepadnavirus precore antigen family. As to quaternary structure, homodimerizes. Phosphorylated. Post-translationally, cleaved by host furin.

It is found in the secreted. The protein resides in the host nucleus. May regulate immune response to the intracellular capsid in acting as a T-cell tolerogen, by having an immunoregulatory effect which prevents destruction of infected cells by cytotoxic T-cells. This immune regulation may predispose to chronicity during perinatal infections and prevent severe liver injury during adult infections. The chain is External core antigen from Urocitellus parryii kennicottii (ASHV).